A 329-amino-acid chain; its full sequence is Protein SPATA31F3 (329 aa).

Residues 11 to 31 (VGYSVYTYGSIFIIALIIWQV) form a helical membrane-spanning segment. Residues 58–85 (SDRATRAKRTSKEEAEKLQKLLDTMKSQ) adopt a coiled-coil conformation. Disordered regions lie at residues 149 to 184 (ADRSSELTYQDTRDVSLSSRFPQSQETDQQSTRSAT), 201 to 250 (QQLD…AAPT), and 288 to 329 (KPMT…KRNI). Residues S152 and S153 each carry the phosphoserine modification. Composition is skewed to polar residues over residues 154–184 (ELTYQDTRDVSLSSRFPQSQETDQQSTRSAT) and 201–223 (QQLDPQGSKMTQDAKGLSSSSTD). Positions 232–242 (QKKRKKTKKLA) are enriched in basic residues. The segment covering 293–320 (EPEKTHSPVRDQAEGAEKKKKPECDLKA) has biased composition (basic and acidic residues).

The protein belongs to the SPATA31 family.

Its subcellular location is the membrane. In Rattus norvegicus (Rat), this protein is Protein SPATA31F3.